Consider the following 72-residue polypeptide: uncharacterized protein (72 aa).

Residues 52-72 form a disordered region; that stretch reads KGGRQRDEAVGVEELCKQHKE. Positions 55–72 are enriched in basic and acidic residues; it reads RQRDEAVGVEELCKQHKE.

The protein belongs to the YiiE family.

This is an uncharacterized protein from Escherichia coli O6:H1 (strain CFT073 / ATCC 700928 / UPEC).